We begin with the raw amino-acid sequence, 339 residues long: Large ribosomal subunit protein uL11m (339 aa).

The protein belongs to the universal ribosomal protein uL11 family.

The protein localises to the mitochondrion. This chain is Large ribosomal subunit protein uL11m (RPL11), found in Acanthamoeba castellanii (Amoeba).